Reading from the N-terminus, the 543-residue chain is CTP synthase (543 aa).

The tract at residues 1–265 (MTNYIFVTGG…DELVVQRFGL (265 aa)) is amidoligase domain. Position 13 (Ser-13) interacts with CTP. Ser-13 provides a ligand contact to UTP. ATP is bound by residues 14-19 (SLGKGI) and Asp-71. Mg(2+) contacts are provided by Asp-71 and Glu-139. CTP-binding positions include 146–148 (DIE), 186–191 (KTKPTQ), and Lys-222. Residues 186–191 (KTKPTQ) and Lys-222 each bind UTP. 238–240 (KDA) provides a ligand contact to ATP. In terms of domain architecture, Glutamine amidotransferase type-1 spans 290-541 (TIGMVGKYVE…VKAAGEYYKN (252 aa)). Position 351 (Gly-351) interacts with L-glutamine. Cys-378 functions as the Nucleophile; for glutamine hydrolysis in the catalytic mechanism. Residues 379–382 (LGMQ), Glu-402, and Arg-469 each bind L-glutamine. Residues His-514 and Glu-516 contribute to the active site.

Belongs to the CTP synthase family. As to quaternary structure, homotetramer.

The catalysed reaction is UTP + L-glutamine + ATP + H2O = CTP + L-glutamate + ADP + phosphate + 2 H(+). It catalyses the reaction L-glutamine + H2O = L-glutamate + NH4(+). The enzyme catalyses UTP + NH4(+) + ATP = CTP + ADP + phosphate + 2 H(+). It participates in pyrimidine metabolism; CTP biosynthesis via de novo pathway; CTP from UDP: step 2/2. Allosterically activated by GTP, when glutamine is the substrate; GTP has no effect on the reaction when ammonia is the substrate. The allosteric effector GTP functions by stabilizing the protein conformation that binds the tetrahedral intermediate(s) formed during glutamine hydrolysis. Inhibited by the product CTP, via allosteric rather than competitive inhibition. Catalyzes the ATP-dependent amination of UTP to CTP with either L-glutamine or ammonia as the source of nitrogen. Regulates intracellular CTP levels through interactions with the four ribonucleotide triphosphates. This is CTP synthase from Pseudoalteromonas atlantica (strain T6c / ATCC BAA-1087).